The sequence spans 279 residues: Beta-porphyranase E (279 aa).

An N-terminal signal peptide occupies residues 1 to 18 (MGNTMLLTLLLVVVAAYG). Positions 19 to 277 (QTPPPPEGFR…WVRSYTLLPV (259 aa)) constitute a GH16 domain. Substrate-binding residues include Trp-56, Arg-60, Glu-141, Glu-146, and Glu-243. Residue Glu-141 is the Nucleophile of the active site. The active-site Proton donor is Glu-146.

This sequence belongs to the glycosyl hydrolase 16 family.

It localises to the periplasm. It catalyses the reaction Hydrolysis of beta-D-galactopyranose-(1-&gt;4)-alpha-L-galactopyranose-6-sulfate linkages in porphyran.. Its function is as follows. Cleaves the sulfated polysaccharide porphyran at the (1-&gt;4) linkages between beta-D-galactopyranose and alpha-L-galactopyranose-6-sulfate, forming mostly the disaccharide alpha-L-galactopyranose-6-sulfate-(1-&gt;3)-beta-D-galactose. The chain is Beta-porphyranase E (porE) from Zobellia galactanivorans (strain DSM 12802 / CCUG 47099 / CIP 106680 / NCIMB 13871 / Dsij).